A 392-amino-acid polypeptide reads, in one-letter code: p21-activated protein kinase-interacting protein 1 (392 aa).

WD repeat units lie at residues 33-72 (VADF…MKKK), 73-113 (IEHG…AKKW), 114-155 (ECLK…LVEG), 156-195 (RSAF…LDTA), 196-235 (SISG…CDSL), and 236-275 (VCLC…KMWK). The segment at 312–392 (SLPPAAEPSP…RKKKKIKTMQ (81 aa)) is disordered. Ser320 is subject to Phosphoserine. Over residues 325–345 (EQSKIGKKEPGDTVHKEEKRS) the composition is skewed to basic and acidic residues. The span at 381-392 (KKRKKKKIKTMQ) shows a compositional bias: basic residues.

As to quaternary structure, interacts with PAK1. In terms of tissue distribution, expressed in brain, colon, heart, kidney, liver, lung, muscle, peripheral blood leukocytes, placenta, small intestine, spleen and thymus.

It is found in the nucleus. Its subcellular location is the nucleolus. In terms of biological role, negatively regulates the PAK1 kinase. PAK1 is a member of the PAK kinase family, which has been shown to play a positive role in the regulation of signaling pathways involving MAPK8 and RELA. PAK1 exists as an inactive homodimer, which is activated by binding of small GTPases such as CDC42 to an N-terminal regulatory domain. PAK1IP1 also binds to the N-terminus of PAK1, and inhibits the specific activation of PAK1 by CDC42. May be involved in ribosomal large subunit assembly. The chain is p21-activated protein kinase-interacting protein 1 (PAK1IP1) from Homo sapiens (Human).